A 433-amino-acid chain; its full sequence is MTESVRLPVARLKPSTVALPGSKSISNRTLLLAALSDNACEIHSLLKSDDTDRMLEALDKLGVQIEYLAEDRLKVHGTGGRFPNRTADLFLGNAGTAFRPLTAALAVLGGDYHLHGVPRMHERPIGDLADALRIAGADVEYLGKEHYPPLHIGKRQDNGERVIPIKGNVSSQFLTALLMALPLTGQAFEIRMVGELISKPYIDITLKLMAQFGVQVANENYRVFKIPADAHYHAPEHLHVEGDASSASYFLAAGLIAATPVRVTGIGANSIQGDVAFARELEKIGADVVWGENFVEVSRPKERAVQSFDLDANHIPDAAMTLAIVALATGQTCTLRNIGSWRVKETDRIAAMANELRKLGAKVVEEAEAIHITPPKTLTPDAVIDTYDDHRMAMCFSLVSLLGVPVVINDPKCTHKTFPTYFDVFSSLTETTE.

3 residues coordinate 3-phosphoshikimate: lysine 23, serine 24, and arginine 28. Residue lysine 23 coordinates phosphoenolpyruvate. The phosphoenolpyruvate site is built by glycine 95 and arginine 123. Serine 170, serine 171, glutamine 172, serine 198, aspartate 317, and lysine 344 together coordinate 3-phosphoshikimate. Glutamine 172 contributes to the phosphoenolpyruvate binding site. The active-site Proton acceptor is aspartate 317. Arginine 348, arginine 391, and lysine 416 together coordinate phosphoenolpyruvate.

The protein belongs to the EPSP synthase family. Monomer.

The protein resides in the cytoplasm. The catalysed reaction is 3-phosphoshikimate + phosphoenolpyruvate = 5-O-(1-carboxyvinyl)-3-phosphoshikimate + phosphate. Its pathway is metabolic intermediate biosynthesis; chorismate biosynthesis; chorismate from D-erythrose 4-phosphate and phosphoenolpyruvate: step 6/7. Functionally, catalyzes the transfer of the enolpyruvyl moiety of phosphoenolpyruvate (PEP) to the 5-hydroxyl of shikimate-3-phosphate (S3P) to produce enolpyruvyl shikimate-3-phosphate and inorganic phosphate. In Neisseria meningitidis serogroup C / serotype 2a (strain ATCC 700532 / DSM 15464 / FAM18), this protein is 3-phosphoshikimate 1-carboxyvinyltransferase.